We begin with the raw amino-acid sequence, 249 residues long: DNA repair protein RecO (249 aa).

Belongs to the RecO family.

In terms of biological role, involved in DNA repair and RecF pathway recombination. The sequence is that of DNA repair protein RecO from Polaromonas sp. (strain JS666 / ATCC BAA-500).